A 163-amino-acid polypeptide reads, in one-letter code: MEFHFDATFFAFVGLILFLALVVYLKVPGMMARSLDDRADQIRNELAEAKRLREEAQHLLAEYQRKRKEAEAEAAHIVAAAEREAEMLTAEAKKKTEEFVANRTALSEQKIKQAEADAMKAVRSAAVDLAIAAAETVLAKKADGKVQSELFGNAVGQVKTRLN.

Residues Phe-5–Leu-25 traverse the membrane as a helical segment.

The protein belongs to the ATPase B chain family. In terms of assembly, F-type ATPases have 2 components, F(1) - the catalytic core - and F(0) - the membrane proton channel. F(1) has five subunits: alpha(3), beta(3), gamma(1), delta(1), epsilon(1). F(0) has three main subunits: a(1), b(2) and c(10-14). The alpha and beta chains form an alternating ring which encloses part of the gamma chain. F(1) is attached to F(0) by a central stalk formed by the gamma and epsilon chains, while a peripheral stalk is formed by the delta and b chains.

It localises to the cell inner membrane. In terms of biological role, f(1)F(0) ATP synthase produces ATP from ADP in the presence of a proton or sodium gradient. F-type ATPases consist of two structural domains, F(1) containing the extramembraneous catalytic core and F(0) containing the membrane proton channel, linked together by a central stalk and a peripheral stalk. During catalysis, ATP synthesis in the catalytic domain of F(1) is coupled via a rotary mechanism of the central stalk subunits to proton translocation. Its function is as follows. Component of the F(0) channel, it forms part of the peripheral stalk, linking F(1) to F(0). The sequence is that of ATP synthase subunit b 1 from Rhizobium etli (strain ATCC 51251 / DSM 11541 / JCM 21823 / NBRC 15573 / CFN 42).